Consider the following 271-residue polypeptide: Cell division protein FtsQ (271 aa).

The interval 1-37 is disordered; that stretch reads MAAGPTTAEKSGASGAKRSSKGSSDGPSRPGTRNRKF. Topologically, residues 1–43 are cytoplasmic; the sequence is MAAGPTTAEKSGASGAKRSSKGSSDGPSRPGTRNRKFRMPGTR. The span at 8-24 shows a compositional bias: low complexity; that stretch reads AEKSGASGAKRSSKGSS. A helical transmembrane segment spans residues 44-64; it reads ALLITLGVLLLVAGGLWALYG. At 65–271 the chain is on the extracellular side; that stretch reads STWFRVERVK…APTAPASSGS (207 aa). The 70-residue stretch at 68–137 folds into the POTRA domain; that stretch reads FRVERVKTSG…HGIGLKVTER (70 aa).

The protein belongs to the FtsQ/DivIB family. FtsQ subfamily.

It is found in the cell membrane. In terms of biological role, essential cell division protein. The polypeptide is Cell division protein FtsQ (Streptomyces venezuelae (strain ATCC 10712 / CBS 650.69 / DSM 40230 / JCM 4526 / NBRC 13096 / PD 04745)).